The primary structure comprises 265 residues: Hydroxyethylthiazole kinase (265 aa).

Position 50 (methionine 50) interacts with substrate. ATP contacts are provided by arginine 125 and threonine 171. Glycine 198 is a substrate binding site.

This sequence belongs to the Thz kinase family. Mg(2+) is required as a cofactor.

It catalyses the reaction 5-(2-hydroxyethyl)-4-methylthiazole + ATP = 4-methyl-5-(2-phosphooxyethyl)-thiazole + ADP + H(+). It functions in the pathway cofactor biosynthesis; thiamine diphosphate biosynthesis; 4-methyl-5-(2-phosphoethyl)-thiazole from 5-(2-hydroxyethyl)-4-methylthiazole: step 1/1. In terms of biological role, catalyzes the phosphorylation of the hydroxyl group of 4-methyl-5-beta-hydroxyethylthiazole (THZ). The protein is Hydroxyethylthiazole kinase of Salmonella arizonae (strain ATCC BAA-731 / CDC346-86 / RSK2980).